Here is a 429-residue protein sequence, read N- to C-terminus: Glucan 1,3-beta-glucosidase (429 aa).

Positions 1–19 (MLSMQVVSLISLLVSVCLA) are cleaved as a signal peptide. Residues 20–27 (QPLPLSKR) constitute a propeptide that is removed on maturation. The active-site Proton donor is E215. 2 cysteine pairs are disulfide-bonded: C299/C425 and C324/C354. E316 functions as the Nucleophile in the catalytic mechanism.

The protein belongs to the glycosyl hydrolase 5 (cellulase A) family.

The protein localises to the secreted. It carries out the reaction Successive hydrolysis of beta-D-glucose units from the non-reducing ends of (1-&gt;3)-beta-D-glucans, releasing alpha-glucose.. Beta-glucanases participate in the metabolism of beta-glucan, the main structural component of the cell wall. It could also function biosynthetically as a transglycosylase. The sequence is that of Glucan 1,3-beta-glucosidase from Kluyveromyces lactis (strain ATCC 8585 / CBS 2359 / DSM 70799 / NBRC 1267 / NRRL Y-1140 / WM37) (Yeast).